A 300-amino-acid chain; its full sequence is Geranyl diphosphate 2-C-methyltransferase (300 aa).

The interval 1–24 (MAAASAPVPGPGGASSTARGRIPA) is disordered.

Belongs to the geranyl diphosphate 2-C-methyltransferase family. Mg(2+) serves as cofactor.

The enzyme catalyses (2E)-geranyl diphosphate + S-adenosyl-L-methionine = (E)-2-methylgeranyl diphosphate + S-adenosyl-L-homocysteine + H(+). Its function is as follows. Catalyzes the SAM-dependent methylation of geranyl diphosphate (GPP) to yield (E)-2-methylgeranyl diphosphate (2-MeGPP). The sequence is that of Geranyl diphosphate 2-C-methyltransferase (gdpmt) from Streptomyces lasalocidi (Streptomyces lasaliensis).